The following is an 876-amino-acid chain: Translation initiation factor IF-2 (876 aa).

The segment at 164–288 (VEIKEPEEPA…EEPAPHAFSA (125 aa)) is disordered. Low complexity predominate over residues 179 to 219 (AAPVAGPEAVPVAPETPSAAPGETVAAVEAEAAPSQPASTE). Over residues 244-259 (VWKEEKVEKRGLKTRG) the composition is skewed to basic and acidic residues. The region spanning 378-547 (ARAPVVTVMG…LLQAEVLELK (170 aa)) is the tr-type G domain. The G1 stretch occupies residues 387 to 394 (GHVDHGKT). 387-394 (GHVDHGKT) contributes to the GTP binding site. Positions 412-416 (GITQH) are G2. Residues 433-436 (DTPG) form a G3 region. GTP contacts are provided by residues 433 to 437 (DTPGH) and 487 to 490 (TKID). The tract at residues 487–490 (TKID) is G4. The interval 523–525 (SAK) is G5.

Belongs to the TRAFAC class translation factor GTPase superfamily. Classic translation factor GTPase family. IF-2 subfamily.

It localises to the cytoplasm. Functionally, one of the essential components for the initiation of protein synthesis. Protects formylmethionyl-tRNA from spontaneous hydrolysis and promotes its binding to the 30S ribosomal subunits. Also involved in the hydrolysis of GTP during the formation of the 70S ribosomal complex. The protein is Translation initiation factor IF-2 of Nitrosospira multiformis (strain ATCC 25196 / NCIMB 11849 / C 71).